A 77-amino-acid polypeptide reads, in one-letter code: Membrane-associated ATPase epsilon chain (77 aa).

This sequence to E.hirae NtpH. Sul-ATPase is composed of six (or maybe five) subunits: alpha, beta, delta, gamma, C (proteolipid), and possibly epsilon.

It carries out the reaction ATP + H2O + 4 H(+)(in) = ADP + phosphate + 5 H(+)(out). The chain is Membrane-associated ATPase epsilon chain (atpE) from Sulfolobus acidocaldarius (strain ATCC 33909 / DSM 639 / JCM 8929 / NBRC 15157 / NCIMB 11770).